We begin with the raw amino-acid sequence, 88 residues long: Small ribosomal subunit protein uS17 (88 aa).

The protein belongs to the universal ribosomal protein uS17 family. As to quaternary structure, part of the 30S ribosomal subunit.

One of the primary rRNA binding proteins, it binds specifically to the 5'-end of 16S ribosomal RNA. This chain is Small ribosomal subunit protein uS17, found in Hahella chejuensis (strain KCTC 2396).